The following is a 1273-amino-acid chain: DNA-directed RNA polymerase subunit beta (1273 aa).

The segment at 1252 to 1273 (ADDQDLVVSSNDEEVSENDERS) is disordered.

The protein belongs to the RNA polymerase beta chain family. As to quaternary structure, the RNAP catalytic core consists of 2 alpha, 1 beta, 1 beta' and 1 omega subunit. When a sigma factor is associated with the core the holoenzyme is formed, which can initiate transcription.

The catalysed reaction is RNA(n) + a ribonucleoside 5'-triphosphate = RNA(n+1) + diphosphate. Functionally, DNA-dependent RNA polymerase catalyzes the transcription of DNA into RNA using the four ribonucleoside triphosphates as substrates. This is DNA-directed RNA polymerase subunit beta from Dehalococcoides mccartyi (strain ATCC BAA-2100 / JCM 16839 / KCTC 5957 / BAV1).